Consider the following 206-residue polypeptide: LexA repressor (206 aa).

The H-T-H motif DNA-binding region spans 28 to 48 (VREIGEAVGLASSSTVHGHLA). Active-site for autocatalytic cleavage activity residues include Ser128 and Lys166.

The protein belongs to the peptidase S24 family. In terms of assembly, homodimer.

It carries out the reaction Hydrolysis of Ala-|-Gly bond in repressor LexA.. Represses a number of genes involved in the response to DNA damage (SOS response), including recA and lexA. In the presence of single-stranded DNA, RecA interacts with LexA causing an autocatalytic cleavage which disrupts the DNA-binding part of LexA, leading to derepression of the SOS regulon and eventually DNA repair. This chain is LexA repressor, found in Bacillus pumilus (strain SAFR-032).